A 504-amino-acid chain; its full sequence is One cut domain family member 2 (504 aa).

Disordered regions lie at residues Leu-29–Ala-95, Lys-166–Gly-189, Glu-274–Glu-332, and Trp-485–Ala-504. Residues Pro-35 to Gly-56 show a composition bias toward gly residues. Residues His-168 to Arg-186 are compositionally biased toward basic residues. The segment at residues Val-324–Ala-410 is a DNA-binding region (CUT). Residues Gln-426–Trp-485 constitute a DNA-binding region (homeobox). Residues Ser-490–Ala-504 are compositionally biased toward low complexity.

It belongs to the CUT homeobox family.

The protein localises to the nucleus. Functionally, transcriptional activator. Activates the transcription of a number of liver genes such as HNF3B. The protein is One cut domain family member 2 (ONECUT2) of Homo sapiens (Human).